We begin with the raw amino-acid sequence, 534 residues long: Ankyrin repeat domain-containing protein 34C (534 aa).

4 ANK repeats span residues 10-39 (TDGN…YINE), 43-80 (KGET…DPNI), 84-114 (SGKT…DPSL), and 118-147 (TGAS…AKGK). The segment at 159 to 205 (SGTKTTKQYLNVPPSPKVEDRQSPPLCTTPSDVELKTSGLASPPSEK) is disordered. A Phosphoserine modification is found at Ser301. Disordered stretches follow at residues 332-368 (YEKG…LKDP) and 384-403 (QPVG…GPLD). At Ser446 the chain carries Phosphoserine. Residues 480–503 (SKPASPLASGLKSMAPVAPNSPKR) form a disordered region.

Belongs to the ANKRD34 family.

In Mus musculus (Mouse), this protein is Ankyrin repeat domain-containing protein 34C (Ankrd34c).